The chain runs to 415 residues: MDTFSYRDAELFAEGVALSRIAERFGTPTYVYSRAHIEAQYRAYADALAGMPHLVCFAVKANSNLGVLNVLARLGAGFDIVSRGELERVLAAGGDPAKVVFSGVGKTRDDMRRALEVGVHCFNVESGEELERLQRVAAELGVKAPVSLRVNPDVDAQTHPYISTGLKENKFGIAIDEAEAVYARAAELDHLEVIGVDCHIGSQLTQLEPFLDALERLLGLVDRLAGKGIGIRHLDLGGGLGVRYRDEQPPLAGDYIRAIRERLHGRDLTLVFEPGRSIVANAGVLLTRVEYLKHTEHKDFAIVDAAMNDLIRPALYQAWMDVQAVRPRDAAPRRYDLVGPICETGDFLAKDRDLALAEGDLLAVRSAGAYGFVMSSNYNTRGRAAEVLVDGEQTHEVRRRETVQELYAGESLLPQ.

N6-(pyridoxal phosphate)lysine is present on K60. Residues G239 and 273 to 276 (EPGR) contribute to the pyridoxal 5'-phosphate site. Positions 276, 312, and 316 each coordinate substrate. The active-site Proton donor is the C342. Residues E343 and Y370 each contribute to the substrate site. Y370 serves as a coordination point for pyridoxal 5'-phosphate.

The protein belongs to the Orn/Lys/Arg decarboxylase class-II family. LysA subfamily. Homodimer. It depends on pyridoxal 5'-phosphate as a cofactor.

It catalyses the reaction meso-2,6-diaminopimelate + H(+) = L-lysine + CO2. The protein operates within amino-acid biosynthesis; L-lysine biosynthesis via DAP pathway; L-lysine from DL-2,6-diaminopimelate: step 1/1. Functionally, specifically catalyzes the decarboxylation of meso-diaminopimelate (meso-DAP) to L-lysine. The polypeptide is Diaminopimelate decarboxylase (Pseudomonas aeruginosa (strain ATCC 15692 / DSM 22644 / CIP 104116 / JCM 14847 / LMG 12228 / 1C / PRS 101 / PAO1)).